The primary structure comprises 267 residues: Chlorophyll a-b binding protein 3B, chloroplastic (267 aa).

The transit peptide at 1 to 34 directs the protein to the chloroplast; sequence MAASTMALSSSTFAGKAVKLSPSSSEISGNGRIT. Residues 19-52 are disordered; that stretch reads KLSPSSSEISGNGRITMRKTAAKPKPASSGSPWX. The chain crosses the membrane as a helical span at residues 153–173; the sequence is LVHAQSILAIWACQVVLMGAV. Residues Val-154, Ser-158, Gln-166, Glu-174, Arg-177, and Leu-183 each coordinate chlorophyll b. Residues Lys-214, Glu-215, Asn-218, Arg-220, Gln-232, His-247, and Ala-256 each contribute to the chlorophyll a site. A helical membrane pass occupies residues 221 to 241; the sequence is LAMFSMFGFFVQAIVTGKGPL. Residue Phe-263 coordinates chlorophyll b.

Belongs to the light-harvesting chlorophyll a/b-binding (LHC) protein family. As to quaternary structure, the LHC complex consists of chlorophyll a-b binding proteins. Binds at least 14 chlorophylls (8 Chl-a and 6 Chl-b) and carotenoids such as lutein and neoxanthin. is required as a cofactor. Post-translationally, photoregulated by reversible phosphorylation of its threonine residues.

The protein resides in the plastid. It is found in the chloroplast thylakoid membrane. In terms of biological role, the light-harvesting complex (LHC) functions as a light receptor, it captures and delivers excitation energy to photosystems with which it is closely associated. The protein is Chlorophyll a-b binding protein 3B, chloroplastic (CAB3B) of Solanum lycopersicum (Tomato).